The following is an 85-amino-acid chain: Large ribosomal subunit protein bL27 (85 aa).

Positions 1 to 20 (MAHKKAGGSTRNGRDSESKR) are disordered.

The protein belongs to the bacterial ribosomal protein bL27 family.

The protein is Large ribosomal subunit protein bL27 of Yersinia pseudotuberculosis serotype O:1b (strain IP 31758).